The chain runs to 320 residues: o-succinylbenzoate synthase (320 aa).

The active-site Proton donor is the Lys-133. Mg(2+)-binding residues include Asp-161, Glu-190, and Asp-213. Lys-235 (proton acceptor) is an active-site residue.

The protein belongs to the mandelate racemase/muconate lactonizing enzyme family. MenC type 1 subfamily. A divalent metal cation is required as a cofactor.

The catalysed reaction is (1R,6R)-6-hydroxy-2-succinyl-cyclohexa-2,4-diene-1-carboxylate = 2-succinylbenzoate + H2O. The protein operates within quinol/quinone metabolism; 1,4-dihydroxy-2-naphthoate biosynthesis; 1,4-dihydroxy-2-naphthoate from chorismate: step 4/7. It functions in the pathway quinol/quinone metabolism; menaquinone biosynthesis. Functionally, converts 2-succinyl-6-hydroxy-2,4-cyclohexadiene-1-carboxylate (SHCHC) to 2-succinylbenzoate (OSB). This is o-succinylbenzoate synthase from Escherichia coli O45:K1 (strain S88 / ExPEC).